The primary structure comprises 388 residues: Probable fatty acid desaturase DES1 (388 aa).

Residues 1 to 33 form a disordered region; that stretch reads MATTPMTVVDHEAEEAVAKAREDDKSRQVDAFD. A compositionally biased stretch (basic and acidic residues) spans 9–30; that stretch reads VDHEAEEAVAKAREDDKSRQVD. 2 helical membrane passes run 62 to 82 and 85 to 105; these read LWYVVRDVAAVVALGTAAAAM and WAVWPVYWAVQGTMFWAFFVL. A Histidine box-1 motif is present at residues 107–111; the sequence is HDCGH. Residues 119-139 form a helical membrane-spanning segment; sequence TLNSVVGHLLHSFILIPYHGW. The Histidine box-2 signature appears at 143–147; it reads HRTHH. 3 consecutive transmembrane segments (helical) span residues 177–194, 226–246, and 248–268; these read IRFTAPYPLLLFPLYLFY, WCIMLASLLAMSCAFGPLQVL, and MYGLPYLVFVMWLDLVTYLHH. Residues 310-314 carry the Histidine box-3 motif; it reads HVIHH.

This sequence belongs to the fatty acid desaturase type 1 family. Highly expressed in root hair cells. Barely detected in panicle, shoot apex, stems and leaves.

It localises to the membrane. Its pathway is lipid metabolism; polyunsaturated fatty acid biosynthesis. The chain is Probable fatty acid desaturase DES1 from Sorghum bicolor (Sorghum).